The sequence spans 393 residues: Ethanol acetyltransferase 1 (393 aa).

Residues 1–25 (MHFTRTLFNQVASKASRQLPVQKRV) constitute a mitochondrion transit peptide. The 103-residue stretch at 49–151 (PIVFVHGIFG…GVIIDNSPIE (103 aa)) folds into the AB hydrolase-1 domain. Residues serine 122, aspartate 146, and histidine 296 each act as charge relay system in the active site. Over residues 343–354 (AKHAQQIEELRK) the composition is skewed to basic and acidic residues. Residues 343–393 (AKHAQQIEELRKVTSTSESSIPHSTQSSEQAFTENIDLARQEREHQKSVSA) are disordered. Polar residues predominate over residues 355–375 (VTSTSESSIPHSTQSSEQAFT). The segment covering 379–393 (DLARQEREHQKSVSA) has biased composition (basic and acidic residues).

This sequence belongs to the AB hydrolase superfamily.

It is found in the mitochondrion. The catalysed reaction is ethanol + acetyl-CoA = ethyl acetate + CoA. It carries out the reaction acetyl-CoA + H2O = acetate + CoA + H(+). It catalyses the reaction ethyl acetate + H2O = ethanol + acetate + H(+). Its function is as follows. Alcohol acetyltransferase that catalyzes the synthesis of ethyl acetate from ethanol and acetyl-CoA. Can also function as a thioesterase by hydrolyzing acetyl-CoA in the absence of ethanol, as well as esterase hydrolyzing ethyl acetate. This Wickerhamomyces ciferrii (strain ATCC 14091 / BCRC 22168 / CBS 111 / JCM 3599 / NBRC 0793 / NRRL Y-1031 F-60-10) (Yeast) protein is Ethanol acetyltransferase 1 (EAT1).